The primary structure comprises 119 residues: uncharacterized protein (119 aa).

2 helical membrane-spanning segments follow: residues 52 to 72 (IVLF…VINI) and 88 to 108 (VLFS…IFLI).

It localises to the membrane. This is an uncharacterized protein from Dictyostelium discoideum (Social amoeba).